Reading from the N-terminus, the 440-residue chain is Tyrosine--tRNA ligase (440 aa).

Tyr46 provides a ligand contact to L-tyrosine. The short motif at 51-60 (PTAPSLHIGN) is the 'HIGH' region element. L-tyrosine-binding residues include Tyr181 and Gln185. A 'KMSKS' region motif is present at residues 241–245 (KFGKS). Lys244 lines the ATP pocket. The S4 RNA-binding domain occupies 373–430 (DRIAQAGVSAGLFKSISEARKTIKSGGVYVNNVRVEDEEQLLGDGDFLKGRFVVLRRG).

The protein belongs to the class-I aminoacyl-tRNA synthetase family. TyrS type 1 subfamily. As to quaternary structure, homodimer.

The protein resides in the cytoplasm. It carries out the reaction tRNA(Tyr) + L-tyrosine + ATP = L-tyrosyl-tRNA(Tyr) + AMP + diphosphate + H(+). Functionally, catalyzes the attachment of tyrosine to tRNA(Tyr) in a two-step reaction: tyrosine is first activated by ATP to form Tyr-AMP and then transferred to the acceptor end of tRNA(Tyr). This chain is Tyrosine--tRNA ligase, found in Bifidobacterium animalis subsp. lactis (strain AD011).